Reading from the N-terminus, the 115-residue chain is NADH-ubiquinone oxidoreductase chain 3 (115 aa).

3 helical membrane-spanning segments follow: residues 4–24, 55–75, and 87–107; these read LLVLLVNSILSLLLILIAFWL, FFLVAITFLLFDLEIALLLPL, and MTLTSFILISVLALGLAYEWL.

Belongs to the complex I subunit 3 family. As to quaternary structure, core subunit of respiratory chain NADH dehydrogenase (Complex I) which is composed of 45 different subunits. Interacts with TMEM186. Interacts with TMEM242.

Its subcellular location is the mitochondrion inner membrane. The catalysed reaction is a ubiquinone + NADH + 5 H(+)(in) = a ubiquinol + NAD(+) + 4 H(+)(out). Core subunit of the mitochondrial membrane respiratory chain NADH dehydrogenase (Complex I) which catalyzes electron transfer from NADH through the respiratory chain, using ubiquinone as an electron acceptor. Essential for the catalytic activity of complex I. The polypeptide is NADH-ubiquinone oxidoreductase chain 3 (Peromyscus eremicus (Cactus mouse)).